The chain runs to 315 residues: tRNA dimethylallyltransferase (315 aa).

An ATP-binding site is contributed by 9–16 (GPTASGKT). Residue 11 to 16 (TASGKT) participates in substrate binding. Interaction with substrate tRNA stretches follow at residues 34 to 37 (DSLL) and 158 to 162 (QRIQR).

This sequence belongs to the IPP transferase family. In terms of assembly, monomer. Mg(2+) is required as a cofactor.

The enzyme catalyses adenosine(37) in tRNA + dimethylallyl diphosphate = N(6)-dimethylallyladenosine(37) in tRNA + diphosphate. Functionally, catalyzes the transfer of a dimethylallyl group onto the adenine at position 37 in tRNAs that read codons beginning with uridine, leading to the formation of N6-(dimethylallyl)adenosine (i(6)A). This is tRNA dimethylallyltransferase from Acidithiobacillus ferrooxidans (strain ATCC 53993 / BNL-5-31) (Leptospirillum ferrooxidans (ATCC 53993)).